A 246-amino-acid polypeptide reads, in one-letter code: Peroxisomal membrane protein 11A (246 aa).

Topologically, residues 1–93 are cytoplasmic; it reads MDAFIRVANQ…LCLTLANLNR (93 aa). The helical transmembrane segment at 94-114 threads the bilayer; the sequence is VVYYICDTVLWAKSVGLTSGV. Topologically, residues 115 to 217 are lumenal; sequence NREKWQRWAA…LNQLGIYKSN (103 aa). A helical transmembrane segment spans residues 218 to 238; the sequence is LGVVGLGGLISSLAGLLTVVY. The required for homodimerization, interaction with PEX11G, and peroxisomal localization stretch occupies residues 218-238; the sequence is LGVVGLGGLISSLAGLLTVVY. Residues 239-246 lie on the Cytoplasmic side of the membrane; it reads PQLKLKAR.

This sequence belongs to the peroxin-11 family. Homodimer. Heterodimer with PEX11G. Probably interacts with COPB2 and COPA. Interacts with PEX19. Interacts with FIS1. In terms of tissue distribution, strongly expressed in liver and at lower levels in heart, brain, kidney and testis.

It is found in the peroxisome membrane. May be involved in peroxisomal proliferation and may regulate peroxisomes division. May mediate binding of coatomer proteins to the peroxisomal membrane. Promotes membrane protrusion and elongation on the peroxisomal surface. The chain is Peroxisomal membrane protein 11A (Pex11a) from Mus musculus (Mouse).